A 487-amino-acid polypeptide reads, in one-letter code: Inosine-5'-monophosphate dehydrogenase (487 aa).

CBS domains follow at residues 93–149 (IVSD…NKTV) and 153–214 (MTPK…CKDE). NAD(+)-binding positions include aspartate 248, 248 to 250 (DSS), and 298 to 300 (GIG). Glycine 300 and glycine 302 together coordinate K(+). Serine 303 contacts IMP. Residue cysteine 305 participates in K(+) binding. The Thioimidate intermediate role is filled by cysteine 305. IMP is bound by residues 338–340 (DGG), 361–362 (GS), and 385–389 (YRGMG). The active-site Proton acceptor is arginine 401. Glutamate 415 lines the IMP pocket. K(+) is bound by residues glutamate 469, serine 470, and histidine 471.

This sequence belongs to the IMPDH/GMPR family. As to quaternary structure, homotetramer. K(+) is required as a cofactor.

The catalysed reaction is IMP + NAD(+) + H2O = XMP + NADH + H(+). Its pathway is purine metabolism; XMP biosynthesis via de novo pathway; XMP from IMP: step 1/1. Its activity is regulated as follows. Mycophenolic acid (MPA) is a non-competitive inhibitor that prevents formation of the closed enzyme conformation by binding to the same site as the amobile flap. In contrast, mizoribine monophosphate (MZP) is a competitive inhibitor that induces the closed conformation. MPA is a potent inhibitor of mammalian IMPDHs but a poor inhibitor of the bacterial enzymes. MZP is a more potent inhibitor of bacterial IMPDH. Its function is as follows. Catalyzes the conversion of inosine 5'-phosphate (IMP) to xanthosine 5'-phosphate (XMP), the first committed and rate-limiting step in the de novo synthesis of guanine nucleotides, and therefore plays an important role in the regulation of cell growth. The chain is Inosine-5'-monophosphate dehydrogenase from Pasteurella multocida (strain Pm70).